We begin with the raw amino-acid sequence, 284 residues long: Insulin-like growth factor-binding protein 2 (284 aa).

Positions 1–21 are cleaved as a signal peptide; that stretch reads MGLSRYLLGLLLGVLCTPAPA. In terms of domain architecture, IGFBP N-terminal spans 23–106; the sequence is VLFRCPPCSP…VLGLGTCGKR (84 aa). 6 disulfides stabilise this stretch: Cys-27/Cys-56, Cys-30/Cys-58, Cys-38/Cys-59, Cys-47/Cys-62, Cys-70/Cys-83, and Cys-77/Cys-103. Positions 108-184 are disordered; that stretch reads DTEYGSSQER…KSEDKKRPAR (77 aa). Residues 117–127 show a composition bias toward basic and acidic residues; it reads RGTELPEERSD. The span at 136-145 shows a compositional bias: low complexity; that stretch reads EAGPAVAGEA. Over residues 152–180 the composition is skewed to basic and acidic residues; sequence KKEMKEIAVTRERANEQQRSKSNKSEDKK. Positions 184-266 constitute a Thyroglobulin type-1 domain; sequence RSLCQLQLDQ…SPTIRGDPEC (83 aa). Intrachain disulfides connect Cys-187–Cys-221, Cys-232–Cys-243, and Cys-245–Cys-266. The Cell attachment site signature appears at 261-263; it reads RGD.

In terms of assembly, interacts with igf1 and igf2.

It is found in the secreted. IGF-binding proteins prolong the half-life of the IGFs and have been shown to either inhibit or stimulate the growth promoting effects of the IGFs on cell culture. They alter the interaction of IGFs with their cell surface receptors. The protein is Insulin-like growth factor-binding protein 2 of Xenopus tropicalis (Western clawed frog).